The chain runs to 175 residues: Peptide deformylase (175 aa).

2 residues coordinate Fe cation: cysteine 98 and histidine 140. The active site involves glutamate 141. Histidine 144 is a Fe cation binding site.

It belongs to the polypeptide deformylase family. Fe(2+) is required as a cofactor.

It carries out the reaction N-terminal N-formyl-L-methionyl-[peptide] + H2O = N-terminal L-methionyl-[peptide] + formate. Removes the formyl group from the N-terminal Met of newly synthesized proteins. Requires at least a dipeptide for an efficient rate of reaction. N-terminal L-methionine is a prerequisite for activity but the enzyme has broad specificity at other positions. In Bradyrhizobium sp. (strain ORS 278), this protein is Peptide deformylase.